A 136-amino-acid chain; its full sequence is Large ribosomal subunit protein uL16 (136 aa).

Belongs to the universal ribosomal protein uL16 family. Part of the 50S ribosomal subunit.

Binds 23S rRNA and is also seen to make contacts with the A and possibly P site tRNAs. This chain is Large ribosomal subunit protein uL16, found in Hamiltonella defensa subsp. Acyrthosiphon pisum (strain 5AT).